Consider the following 882-residue polypeptide: Valine--tRNA ligase (882 aa).

Residues proline 50–histidine 60 carry the 'HIGH' region motif. The 'KMSKS' region motif lies at lysine 526–serine 530. Lysine 529 lines the ATP pocket. The stretch at leucine 810 to glutamate 881 forms a coiled coil.

Belongs to the class-I aminoacyl-tRNA synthetase family. ValS type 1 subfamily. In terms of assembly, monomer.

The protein resides in the cytoplasm. The catalysed reaction is tRNA(Val) + L-valine + ATP = L-valyl-tRNA(Val) + AMP + diphosphate. Functionally, catalyzes the attachment of valine to tRNA(Val). As ValRS can inadvertently accommodate and process structurally similar amino acids such as threonine, to avoid such errors, it has a 'posttransfer' editing activity that hydrolyzes mischarged Thr-tRNA(Val) in a tRNA-dependent manner. This Listeria innocua serovar 6a (strain ATCC BAA-680 / CLIP 11262) protein is Valine--tRNA ligase.